The chain runs to 124 residues: Small ribosomal subunit protein bS6 (124 aa).

The tract at residues 93-124 (KKAETGPSSMMKTVEREEARKAQQAEYAANNS) is disordered. Basic and acidic residues predominate over residues 105–115 (TVEREEARKAQ).

Belongs to the bacterial ribosomal protein bS6 family.

Binds together with bS18 to 16S ribosomal RNA. The protein is Small ribosomal subunit protein bS6 of Variovorax paradoxus (strain S110).